The chain runs to 224 residues: UPF0441 protein ECA0329 (224 aa).

The interval 180-224 is disordered; that stretch reads TALAPKPATTSTITRGGFGETVAKQNSMQRSSASSNSSSSRSMGG. Residues 204-224 are compositionally biased toward low complexity; that stretch reads QNSMQRSSASSNSSSSRSMGG.

The protein belongs to the UPF0441 family.

The polypeptide is UPF0441 protein ECA0329 (Pectobacterium atrosepticum (strain SCRI 1043 / ATCC BAA-672) (Erwinia carotovora subsp. atroseptica)).